Here is a 316-residue protein sequence, read N- to C-terminus: Ferrochelatase (316 aa).

Fe cation contacts are provided by H190 and E271.

Belongs to the ferrochelatase family.

It is found in the cytoplasm. The catalysed reaction is heme b + 2 H(+) = protoporphyrin IX + Fe(2+). The protein operates within porphyrin-containing compound metabolism; protoheme biosynthesis; protoheme from protoporphyrin-IX: step 1/1. Its function is as follows. Catalyzes the ferrous insertion into protoporphyrin IX. The polypeptide is Ferrochelatase (Sulfurimonas denitrificans (strain ATCC 33889 / DSM 1251) (Thiomicrospira denitrificans (strain ATCC 33889 / DSM 1251))).